Here is a 355-residue protein sequence, read N- to C-terminus: Serum paraoxonase/arylesterase 1 (355 aa).

A disulfide bridge links Cys-42 with Cys-353. Residues Glu-53 and Asp-54 each coordinate Ca(2+). His-115 acts as the Proton acceptor in catalysis. Residues Ile-117, Asn-168, Asp-169, and Asn-224 each contribute to the Ca(2+) site. A glycan (N-linked (GlcNAc...) asparagine) is linked at Asn-253. Asp-269 and Asn-270 together coordinate Ca(2+). 2 N-linked (GlcNAc...) asparagine glycosylation sites follow: Asn-270 and Asn-324.

It belongs to the paraoxonase family. Homodimer. Interacts with CLU. Ca(2+) is required as a cofactor. Post-translationally, glycosylated. In terms of processing, the signal sequence is not cleaved. In terms of tissue distribution, plasma. Associated with HDL.

It localises to the secreted. The protein localises to the extracellular space. It carries out the reaction a phenyl acetate + H2O = a phenol + acetate + H(+). The enzyme catalyses An aryl dialkyl phosphate + H2O = dialkyl phosphate + an aryl alcohol.. The catalysed reaction is an N-acyl-L-homoserine lactone + H2O = an N-acyl-L-homoserine + H(+). Functionally, hydrolyzes the toxic metabolites of a variety of organophosphorus insecticides. Capable of hydrolyzing a broad spectrum of organophosphate substrates and lactones, and a number of aromatic carboxylic acid esters. Mediates an enzymatic protection of low density lipoproteins against oxidative modification. The chain is Serum paraoxonase/arylesterase 1 (Pon1) from Rattus norvegicus (Rat).